Consider the following 366-residue polypeptide: Chalcone synthase B (366 aa).

Cysteine 172 is a catalytic residue.

Belongs to the thiolase-like superfamily. Chalcone/stilbene synthases family.

The enzyme catalyses (E)-4-coumaroyl-CoA + 3 malonyl-CoA + 3 H(+) = 2',4,4',6'-tetrahydroxychalcone + 3 CO2 + 4 CoA. Its pathway is secondary metabolite biosynthesis; flavonoid biosynthesis. The primary product of this enzyme is 4,2',4',6'-tetrahydroxychalcone (also termed naringenin-chalcone or chalcone) which can under specific conditions spontaneously isomerize into naringenin. The protein is Chalcone synthase B (CHSB) of Ipomoea trifida (Morning glory).